A 73-amino-acid chain; its full sequence is Translation initiation factor IF-1 (73 aa).

The S1-like domain occupies 1-73; that stretch reads MAKKEDTLVL…TKARVVYRHR (73 aa).

The protein belongs to the IF-1 family. Component of the 30S ribosomal translation pre-initiation complex which assembles on the 30S ribosome in the order IF-2 and IF-3, IF-1 and N-formylmethionyl-tRNA(fMet); mRNA recruitment can occur at any time during PIC assembly.

Its subcellular location is the cytoplasm. Functionally, one of the essential components for the initiation of protein synthesis. Stabilizes the binding of IF-2 and IF-3 on the 30S subunit to which N-formylmethionyl-tRNA(fMet) subsequently binds. Helps modulate mRNA selection, yielding the 30S pre-initiation complex (PIC). Upon addition of the 50S ribosomal subunit IF-1, IF-2 and IF-3 are released leaving the mature 70S translation initiation complex. This is Translation initiation factor IF-1 from Chlamydia pneumoniae (Chlamydophila pneumoniae).